The primary structure comprises 527 residues: Estrogen receptor beta (527 aa).

Residues 1–145 form a modulating region; the sequence is MDVKNSPSSL…SPSSKRDAHF (145 aa). Residues Ser-84 and Ser-102 each carry the phosphoserine; by MAPK modification. 2 consecutive NR C4-type zinc fingers follow at residues 146-166 and 182-206; these read CAVC…CEGC and CPAT…LRKC. Positions 146–211 form a DNA-binding region, nuclear receptor; the sequence is CAVCSDYASG…RLRKCYEVGM (66 aa). Residues 261–495 form the NR LBD domain; the sequence is SPEQLVLTLL…DLLLEMLNAH (235 aa). Residues 505–527 are disordered; the sequence is TRSERNLAEDSESKEGSQKPQAQ. Residues 506–521 are compositionally biased toward basic and acidic residues; sequence RSERNLAEDSESKEGS.

This sequence belongs to the nuclear hormone receptor family. NR3 subfamily. As to quaternary structure, binds DNA as a homodimer. Can form a heterodimer with ESR1. Interacts with NCOA1, NCOA3, NCOA5 and NCOA6 coactivators, leading to a strong increase of transcription of target genes. Interacts with UBE1C and AKAP13. Interacts with DNTTIP2. Interacts with CCDC62 in the presence of estradiol/E2; this interaction seems to enhance the transcription of target genes. Interacts with DNAAF4. Interacts with PRMT2. Interacts with CCAR2 (via N-terminus) in a ligand-independent manner. Interacts with RBM39, in the presence of estradiol (E2). Interacts with STUB1/CHIP. Phosphorylation at Ser-84 and Ser-102 recruits NCOA1.

Its subcellular location is the nucleus. In terms of biological role, nuclear hormone receptor. Binds estrogens with an affinity similar to that of ESR1/ER-alpha, and activates expression of reporter genes containing estrogen response elements (ERE) in an estrogen-dependent manner. The polypeptide is Estrogen receptor beta (ESR2) (Ovis aries (Sheep)).